A 502-amino-acid chain; its full sequence is Acetylcholine receptor subunit alpha-type unc-63 (502 aa).

The first 23 residues, 1-23, serve as a signal peptide directing secretion; it reads MGPNDHGFAYILIFLLLSPPTHA. Residues 24–263 lie on the Extracellular side of the membrane; that stretch reads NRDANRLFED…HLRRKTLFYT (240 aa). An N-linked (GlcNAc...) asparagine glycan is attached at asparagine 136. Cysteine 151 and cysteine 165 form a disulfide bridge. 3 helical membrane-spanning segments follow: residues 264-284, 293-313, and 326-346; these read VNLIFPSVGISFLTALVFYLP, LCISILISLTVFFLLLVEIIP, and LLFTMVLVTLSVVVTVVTLNV. The Cytoplasmic portion of the chain corresponds to 347 to 470; it reads HYRSPTTHTM…WKYISVVMDR (124 aa). Residues 471–491 traverse the membrane as a helical segment; that stretch reads IFLITFTFACAFGTVVIIARA.

This sequence belongs to the ligand-gated ion channel (TC 1.A.9) family. Acetylcholine receptor (TC 1.A.9.1) subfamily. As to quaternary structure, component of nicotinic acetylcholine receptor. In muscles, composed of 2 non-alpha subunits lev-1 and unc-29, and 3 alpha subunits unc-38, unc-63 and lev-8. In cholinergic motoneurons, composed of 2 non-alpha subunits acr-2 and acr-3, and 3 alpha subunits unc-38, unc-63 and acr-12. Interacts with lev-10. Expressed in body wall muscles, in vulval muscles and in neurons.

It localises to the postsynaptic cell membrane. The protein resides in the cell membrane. In terms of biological role, alpha subunit of nicotinic acetylcholine receptor (nAChR). Probably acts in cholinergic motoneurons to regulate presynaptic neurotransmitter release, thereby ensuring normal level of excitation of cholinergic motoneurons during locomotion. Involved in nAChR sensitivity to nicotine and levamisole. The protein is Acetylcholine receptor subunit alpha-type unc-63 (unc-63) of Caenorhabditis elegans.